A 152-amino-acid chain; its full sequence is 3-dehydroquinate dehydratase (152 aa).

Catalysis depends on tyrosine 23, which acts as the Proton acceptor. Residues asparagine 74, histidine 80, and aspartate 87 each coordinate substrate. Residue histidine 100 is the Proton donor of the active site. Residues 101 to 102 (LS) and arginine 111 each bind substrate.

Belongs to the type-II 3-dehydroquinase family. In terms of assembly, homododecamer.

It carries out the reaction 3-dehydroquinate = 3-dehydroshikimate + H2O. It functions in the pathway metabolic intermediate biosynthesis; chorismate biosynthesis; chorismate from D-erythrose 4-phosphate and phosphoenolpyruvate: step 3/7. Functionally, catalyzes a trans-dehydration via an enolate intermediate. The sequence is that of 3-dehydroquinate dehydratase from Clostridium botulinum (strain Langeland / NCTC 10281 / Type F).